The following is a 183-amino-acid chain: Translation initiation factor IF-3 (183 aa).

It belongs to the IF-3 family. In terms of assembly, monomer.

It localises to the cytoplasm. Its function is as follows. IF-3 binds to the 30S ribosomal subunit and shifts the equilibrium between 70S ribosomes and their 50S and 30S subunits in favor of the free subunits, thus enhancing the availability of 30S subunits on which protein synthesis initiation begins. The protein is Translation initiation factor IF-3 of Vibrio cholerae serotype O1 (strain ATCC 39315 / El Tor Inaba N16961).